The primary structure comprises 553 residues: Putative transport protein YidE (553 aa).

5 helical membrane passes run 4-24, 28-48, 65-85, 95-115, and 158-178; these read IALT…IGNI, GVGF…HFVD, FGLI…FFAS, LFAV…HKIF, and MSYA…MWLM. RCK C-terminal domains are found at residues 192–276 and 279–361; these read KHES…VIGK and DTSL…VVGN. A run of 5 helical transmembrane segments spans residues 371-391, 403-425, 437-457, 464-484, and 533-553; these read MLPV…PLFV, AGGP…LYWF, LGIV…FVNT, LSWI…VGLL, and LVMF…WGIG.

The protein belongs to the AAE transporter (TC 2.A.81) family. YidE subfamily.

Its subcellular location is the cell membrane. This is Putative transport protein YidE from Salmonella arizonae (strain ATCC BAA-731 / CDC346-86 / RSK2980).